The primary structure comprises 292 residues: Formamidopyrimidine-DNA glycosylase (292 aa).

The active-site Schiff-base intermediate with DNA is the Pro-2. Glu-3 functions as the Proton donor in the catalytic mechanism. Catalysis depends on Lys-61, which acts as the Proton donor; for beta-elimination activity. Residues His-96, Arg-115, and Lys-161 each coordinate DNA. The FPG-type zinc finger occupies 247–281; it reads SAYGQEDRPCPRCGTAIRREKFMNRSSFSCPKCQP. Arg-271 (proton donor; for delta-elimination activity) is an active-site residue.

The protein belongs to the FPG family. Monomer. Zn(2+) serves as cofactor.

The enzyme catalyses Hydrolysis of DNA containing ring-opened 7-methylguanine residues, releasing 2,6-diamino-4-hydroxy-5-(N-methyl)formamidopyrimidine.. The catalysed reaction is 2'-deoxyribonucleotide-(2'-deoxyribose 5'-phosphate)-2'-deoxyribonucleotide-DNA = a 3'-end 2'-deoxyribonucleotide-(2,3-dehydro-2,3-deoxyribose 5'-phosphate)-DNA + a 5'-end 5'-phospho-2'-deoxyribonucleoside-DNA + H(+). Its function is as follows. Involved in base excision repair of DNA damaged by oxidation or by mutagenic agents. Acts as a DNA glycosylase that recognizes and removes damaged bases. Has a preference for oxidized purines, such as 7,8-dihydro-8-oxoguanine (8-oxoG). Has AP (apurinic/apyrimidinic) lyase activity and introduces nicks in the DNA strand. Cleaves the DNA backbone by beta-delta elimination to generate a single-strand break at the site of the removed base with both 3'- and 5'-phosphates. The chain is Formamidopyrimidine-DNA glycosylase from Rhodococcus jostii (strain RHA1).